The chain runs to 156 residues: Small ribosomal subunit protein uS7 (156 aa).

This sequence belongs to the universal ribosomal protein uS7 family. In terms of assembly, part of the 30S ribosomal subunit. Contacts proteins S9 and S11.

Functionally, one of the primary rRNA binding proteins, it binds directly to 16S rRNA where it nucleates assembly of the head domain of the 30S subunit. Is located at the subunit interface close to the decoding center, probably blocks exit of the E-site tRNA. The protein is Small ribosomal subunit protein uS7 of Clavibacter sepedonicus (Clavibacter michiganensis subsp. sepedonicus).